The chain runs to 82 residues: MSDTIRTLQGRVLSDKMDKSITVAIERKVKHPLYGKFIKRTTKIHAHDEQNQCNAGDIVTIRECRPLSKTKSWTLVEVVTKA.

This sequence belongs to the universal ribosomal protein uS17 family. As to quaternary structure, part of the 30S ribosomal subunit.

In terms of biological role, one of the primary rRNA binding proteins, it binds specifically to the 5'-end of 16S ribosomal RNA. The polypeptide is Small ribosomal subunit protein uS17 (Shewanella pealeana (strain ATCC 700345 / ANG-SQ1)).